The chain runs to 494 residues: NADH-quinone oxidoreductase subunit N (494 aa).

14 helical membrane-spanning segments follow: residues 13 to 33 (LIAL…MLAI), 43 to 63 (FVLT…AMGV), 82 to 102 (MALV…YLGG), 117 to 137 (LLIL…HLVG), 138 to 158 (LFIG…YAFF), 169 to 189 (YMVL…LLYA), 209 to 229 (LLVE…LSLV), 243 to 263 (PAPV…AVLL), 277 to 297 (LNEL…LLAL), 311 to 331 (IAHF…AVEA), 332 to 352 (IGVY…VITL), 380 to 400 (AVLT…GFIG), 412 to 432 (QLWW…FYYL), and 461 to 481 (IMLL…QPLL).

Belongs to the complex I subunit 2 family. In terms of assembly, NDH-1 is composed of 13 different subunits. Subunits NuoA, H, J, K, L, M, N constitute the membrane sector of the complex.

Its subcellular location is the cell inner membrane. The enzyme catalyses a quinone + NADH + 5 H(+)(in) = a quinol + NAD(+) + 4 H(+)(out). Functionally, NDH-1 shuttles electrons from NADH, via FMN and iron-sulfur (Fe-S) centers, to quinones in the respiratory chain. The immediate electron acceptor for the enzyme in this species is believed to be ubiquinone. Couples the redox reaction to proton translocation (for every two electrons transferred, four hydrogen ions are translocated across the cytoplasmic membrane), and thus conserves the redox energy in a proton gradient. This chain is NADH-quinone oxidoreductase subunit N, found in Ectopseudomonas mendocina (strain ymp) (Pseudomonas mendocina).